The following is a 441-amino-acid chain: Ribulose bisphosphate carboxylase large chain (441 aa).

Substrate is bound by residues asparagine 89 and threonine 139. The active-site Proton acceptor is the lysine 141. Lysine 143 provides a ligand contact to substrate. Residues lysine 167, aspartate 169, and glutamate 170 each contribute to the Mg(2+) site. Lysine 167 is subject to N6-carboxylysine. Catalysis depends on histidine 260, which acts as the Proton acceptor. 3 residues coordinate substrate: arginine 261, histidine 293, and serine 345.

Belongs to the RuBisCO large chain family. Type I subfamily. Heterohexadecamer of 8 large chains and 8 small chains; disulfide-linked. The disulfide link is formed within the large subunit homodimers. Mg(2+) is required as a cofactor. In terms of processing, the disulfide bond which can form in the large chain dimeric partners within the hexadecamer appears to be associated with oxidative stress and protein turnover.

It is found in the plastid. The protein resides in the chloroplast. The catalysed reaction is 2 (2R)-3-phosphoglycerate + 2 H(+) = D-ribulose 1,5-bisphosphate + CO2 + H2O. The enzyme catalyses D-ribulose 1,5-bisphosphate + O2 = 2-phosphoglycolate + (2R)-3-phosphoglycerate + 2 H(+). Functionally, ruBisCO catalyzes two reactions: the carboxylation of D-ribulose 1,5-bisphosphate, the primary event in carbon dioxide fixation, as well as the oxidative fragmentation of the pentose substrate in the photorespiration process. Both reactions occur simultaneously and in competition at the same active site. The polypeptide is Ribulose bisphosphate carboxylase large chain (Symphoricarpos albus (Common snowberry)).